A 549-amino-acid chain; its full sequence is Calcium-dependent protein kinase 5 (549 aa).

The N-myristoyl glycine moiety is linked to residue Gly-2. The segment at 43-69 (DEPAGKKAPRGSAAAADAPHAASMKRG) is disordered. Residues 52–64 (RGSAAAADAPHAA) show a composition bias toward low complexity. Residues 92–350 (YALGRKLGQG…AHEVLCHPWI (259 aa)) form the Protein kinase domain. Residues 98-106 (LGQGQFGTT) and Lys-121 contribute to the ATP site. The active-site Proton acceptor is Asp-216. The interval 356–386 (APDRPLDPAVLSRIKQFSAMNKLKKMALRVI) is autoinhibitory domain. EF-hand domains lie at 393–428 (EEIA…YGST), 429–464 (LKDT…LNKL), 465–500 (EREE…HNMP), and 501–534 (DAFL…GNMG). Residues Asp-406, Asp-408, Ser-410, Glu-417, Asp-442, Asp-444, Ser-446, Thr-448, Glu-453, Asp-478, Asp-480, Ser-482, Tyr-484, Glu-489, Asp-512, Asp-514, Asp-516, Arg-518, and Glu-523 each coordinate Ca(2+).

Belongs to the protein kinase superfamily. Ser/Thr protein kinase family. CDPK subfamily.

It localises to the membrane. The catalysed reaction is L-seryl-[protein] + ATP = O-phospho-L-seryl-[protein] + ADP + H(+). The enzyme catalyses L-threonyl-[protein] + ATP = O-phospho-L-threonyl-[protein] + ADP + H(+). Activated by calcium. Autophosphorylation may play an important role in the regulation of the kinase activity. May play a role in signal transduction pathways that involve calcium as a second messenger. The polypeptide is Calcium-dependent protein kinase 5 (Oryza sativa subsp. japonica (Rice)).